The primary structure comprises 236 residues: TVP38/TMEM64 family membrane protein YdjX (236 aa).

Helical transmembrane passes span 7 to 27 (FLFACLIFALVIYAIHAFGLF), 50 to 70 (LYILLFIIATLLLLPGSILVI), 72 to 92 (GGIVFGPLLGTLLSLIAATLA), 156 to 176 (IAFWPYTLISALTTLPGIVIY), and 192 to 212 (FILQLCLAGLALFILVQLAKL). Residues 73–183 (GIVFGPLLGT…VIYTVMASDL (111 aa)) form a VTT domain region.

Belongs to the TVP38/TMEM64 family.

The protein resides in the cell membrane. The sequence is that of TVP38/TMEM64 family membrane protein YdjX (ydjX) from Escherichia coli (strain K12).